The primary structure comprises 91 residues: ATP synthase subunit c (91 aa).

Helical transmembrane passes span 4 to 24 (FTMCVLAAGIGMALGTLGTGI) and 53 to 73 (IGLAMIESLAIYALVVCLIIL).

It belongs to the ATPase C chain family. F-type ATPases have 2 components, F(1) - the catalytic core - and F(0) - the membrane proton channel. F(1) has five subunits: alpha(3), beta(3), gamma(1), delta(1), epsilon(1). F(0) has three main subunits: a(1), b(2) and c(10-14). The alpha and beta chains form an alternating ring which encloses part of the gamma chain. F(1) is attached to F(0) by a central stalk formed by the gamma and epsilon chains, while a peripheral stalk is formed by the delta and b chains.

Its subcellular location is the cell inner membrane. F(1)F(0) ATP synthase produces ATP from ADP in the presence of a proton or sodium gradient. F-type ATPases consist of two structural domains, F(1) containing the extramembraneous catalytic core and F(0) containing the membrane proton channel, linked together by a central stalk and a peripheral stalk. During catalysis, ATP synthesis in the catalytic domain of F(1) is coupled via a rotary mechanism of the central stalk subunits to proton translocation. Its function is as follows. Key component of the F(0) channel; it plays a direct role in translocation across the membrane. A homomeric c-ring of between 10-14 subunits forms the central stalk rotor element with the F(1) delta and epsilon subunits. In Citrifermentans bemidjiense (strain ATCC BAA-1014 / DSM 16622 / JCM 12645 / Bem) (Geobacter bemidjiensis), this protein is ATP synthase subunit c.